The sequence spans 210 residues: Glutathione S-transferase P 2 (210 aa).

The region spanning Pro-2 to Gly-81 is the GST N-terminal domain. Glutathione-binding positions include Tyr-8, Arg-14, Trp-39, Lys-45, Gln-52–Leu-53, and Gln-65–Ser-66. The region spanning Asn-83–Ile-204 is the GST C-terminal domain.

This sequence belongs to the GST superfamily. Pi family. In terms of assembly, homodimer. As to expression, selectively expressed in gall bladder, colon, heart, and skeletal muscle.

It carries out the reaction RX + glutathione = an S-substituted glutathione + a halide anion + H(+). In terms of biological role, conjugation of reduced glutathione to a wide number of exogenous and endogenous hydrophobic electrophiles. Cannot metabolize 1-chloro-2,4-dinitrobenzene. This Mus musculus (Mouse) protein is Glutathione S-transferase P 2 (Gstp2).